Consider the following 372-residue polypeptide: Methylthioribose-1-phosphate isomerase 1 (372 aa).

The active-site Proton donor is the Asp254.

Belongs to the eIF-2B alpha/beta/delta subunits family. MtnA subfamily.

The protein localises to the cytoplasm. The protein resides in the nucleus. The catalysed reaction is 5-(methylsulfanyl)-alpha-D-ribose 1-phosphate = 5-(methylsulfanyl)-D-ribulose 1-phosphate. Its pathway is amino-acid biosynthesis; L-methionine biosynthesis via salvage pathway; L-methionine from S-methyl-5-thio-alpha-D-ribose 1-phosphate: step 1/6. In terms of biological role, catalyzes the interconversion of methylthioribose-1-phosphate (MTR-1-P) into methylthioribulose-1-phosphate (MTRu-1-P). In Trypanosoma cruzi (strain CL Brener), this protein is Methylthioribose-1-phosphate isomerase 1.